Consider the following 108-residue polypeptide: Structural protein 1 (108 aa).

The disordered stretch occupies residues 1–20 (MSRVSEYGVPEGVRESDSDT). The Intravirion segment spans residues 1-77 (MSRVSEYGVP…LKMQMDRLCN (77 aa)). Residues 78 to 98 (VLGVVLQMATLALVTYIAFVV) traverse the membrane as a helical; Signal-anchor for type II membrane protein segment. The Virion surface segment spans residues 99–108 (HTRATSCKRE).

It belongs to the varicellovirus ORF1 protein family. Homodimer. In terms of processing, phosphorylated.

It is found in the virion membrane. It localises to the host Golgi apparatus membrane. This is Structural protein 1 from Varicella-zoster virus (strain Dumas) (HHV-3).